The following is a 2183-amino-acid chain: DNA polymerase epsilon catalytic subunit A (2183 aa).

Positions 2066, 2069, 2090, and 2093 each coordinate Zn(2+). Residues 2066 to 2093 form a CysA-type zinc finger; that stretch reads CFKCKNPCDLDLCKDSCCTKSGFRCPLC. Positions 2124, 2127, 2139, and 2141 each coordinate [4Fe-4S] cluster. The CysB motif motif lies at 2124-2141; the sequence is CDKCRRVKEYELTEFCPC.

It belongs to the DNA polymerase type-B family. As to quaternary structure, heterotetramer. Consists of 4 subunits: POL2, DPB2, DPB3 and DPB4. [4Fe-4S] cluster serves as cofactor.

Its subcellular location is the nucleus. It catalyses the reaction DNA(n) + a 2'-deoxyribonucleoside 5'-triphosphate = DNA(n+1) + diphosphate. Its function is as follows. DNA polymerase II participates in chromosomal DNA replication. The polypeptide is DNA polymerase epsilon catalytic subunit A (POL2) (Yarrowia lipolytica (strain CLIB 122 / E 150) (Yeast)).